The primary structure comprises 120 residues: NAD(P)H-quinone oxidoreductase subunit 3, chloroplastic (120 aa).

3 helical membrane-spanning segments follow: residues 9–29 (IFWAFLIISSAIPILAFLISG), 64–84 (MFALVFVVFDVETVFLYPWAM), and 88–108 (VLGVPVFIEAFIFVLILIVGS).

It belongs to the complex I subunit 3 family. As to quaternary structure, NDH is composed of at least 16 different subunits, 5 of which are encoded in the nucleus.

The protein localises to the plastid. Its subcellular location is the chloroplast thylakoid membrane. The enzyme catalyses a plastoquinone + NADH + (n+1) H(+)(in) = a plastoquinol + NAD(+) + n H(+)(out). It carries out the reaction a plastoquinone + NADPH + (n+1) H(+)(in) = a plastoquinol + NADP(+) + n H(+)(out). Its function is as follows. NDH shuttles electrons from NAD(P)H:plastoquinone, via FMN and iron-sulfur (Fe-S) centers, to quinones in the photosynthetic chain and possibly in a chloroplast respiratory chain. The immediate electron acceptor for the enzyme in this species is believed to be plastoquinone. Couples the redox reaction to proton translocation, and thus conserves the redox energy in a proton gradient. This Gossypium hirsutum (Upland cotton) protein is NAD(P)H-quinone oxidoreductase subunit 3, chloroplastic.